A 282-amino-acid chain; its full sequence is Bifunctional protein FolD (282 aa).

NADP(+)-binding positions include 166–168 and S191; that span reads GRS.

The protein belongs to the tetrahydrofolate dehydrogenase/cyclohydrolase family. In terms of assembly, homodimer.

It carries out the reaction (6R)-5,10-methylene-5,6,7,8-tetrahydrofolate + NADP(+) = (6R)-5,10-methenyltetrahydrofolate + NADPH. It catalyses the reaction (6R)-5,10-methenyltetrahydrofolate + H2O = (6R)-10-formyltetrahydrofolate + H(+). The protein operates within one-carbon metabolism; tetrahydrofolate interconversion. In terms of biological role, catalyzes the oxidation of 5,10-methylenetetrahydrofolate to 5,10-methenyltetrahydrofolate and then the hydrolysis of 5,10-methenyltetrahydrofolate to 10-formyltetrahydrofolate. The chain is Bifunctional protein FolD from Acidovorax sp. (strain JS42).